The sequence spans 177 residues: Large ribosomal subunit protein uL22 (177 aa).

The interval 118 to 177 (VESRPSREGRRGGAGESAGGARARRAQGSKAAAAKKAPASSSKKAATTTEASEEAKGGSQ) is disordered. A compositionally biased stretch (basic and acidic residues) spans 121–130 (RPSREGRRGG). Positions 145–167 (GSKAAAAKKAPASSSKKAATTTE) are enriched in low complexity.

This sequence belongs to the universal ribosomal protein uL22 family. Part of the 50S ribosomal subunit.

Its function is as follows. This protein binds specifically to 23S rRNA; its binding is stimulated by other ribosomal proteins, e.g. L4, L17, and L20. It is important during the early stages of 50S assembly. It makes multiple contacts with different domains of the 23S rRNA in the assembled 50S subunit and ribosome. The globular domain of the protein is located near the polypeptide exit tunnel on the outside of the subunit, while an extended beta-hairpin is found that lines the wall of the exit tunnel in the center of the 70S ribosome. The sequence is that of Large ribosomal subunit protein uL22 from Mycobacterium sp. (strain KMS).